Here is a 166-residue protein sequence, read N- to C-terminus: Large ribosomal subunit protein uL10 (166 aa).

It belongs to the universal ribosomal protein uL10 family. As to quaternary structure, part of the ribosomal stalk of the 50S ribosomal subunit. The N-terminus interacts with L11 and the large rRNA to form the base of the stalk. The C-terminus forms an elongated spine to which L12 dimers bind in a sequential fashion forming a multimeric L10(L12)X complex.

Forms part of the ribosomal stalk, playing a central role in the interaction of the ribosome with GTP-bound translation factors. The protein is Large ribosomal subunit protein uL10 (rplJ) of Neisseria meningitidis serogroup A / serotype 4A (strain DSM 15465 / Z2491).